A 188-amino-acid polypeptide reads, in one-letter code: NADH-quinone oxidoreductase subunit I 2 (188 aa).

2 4Fe-4S ferredoxin-type domains span residues 56–88 (HFLKRDDEGEIKCVACELCARICPCDCIEVVPY) and 98–127 (AKFEIDTARCLFCGLCEDACPADAIALGQQ). C68, C71, C74, C78, C107, C110, C113, and C117 together coordinate [4Fe-4S] cluster.

This sequence belongs to the complex I 23 kDa subunit family. In terms of assembly, NDH-1 is composed of 14 different subunits. Subunits NuoA, H, J, K, L, M, N constitute the membrane sector of the complex. It depends on [4Fe-4S] cluster as a cofactor.

Its subcellular location is the cell inner membrane. It carries out the reaction a quinone + NADH + 5 H(+)(in) = a quinol + NAD(+) + 4 H(+)(out). Functionally, NDH-1 shuttles electrons from NADH, via FMN and iron-sulfur (Fe-S) centers, to quinones in the respiratory chain. The immediate electron acceptor for the enzyme in this species is believed to be ubiquinone. Couples the redox reaction to proton translocation (for every two electrons transferred, four hydrogen ions are translocated across the cytoplasmic membrane), and thus conserves the redox energy in a proton gradient. This chain is NADH-quinone oxidoreductase subunit I 2, found in Rhizobium meliloti (strain 1021) (Ensifer meliloti).